The chain runs to 491 residues: Cobyric acid synthase (491 aa).

The GATase cobBQ-type domain occupies 250 to 439 (EVTIAVIRLP…LHGIFDNGAW (190 aa)). Cys331 acts as the Nucleophile in catalysis. Residue His431 is part of the active site.

It belongs to the CobB/CobQ family. CobQ subfamily.

It participates in cofactor biosynthesis; adenosylcobalamin biosynthesis. Its function is as follows. Catalyzes amidations at positions B, D, E, and G on adenosylcobyrinic A,C-diamide. NH(2) groups are provided by glutamine, and one molecule of ATP is hydrogenolyzed for each amidation. The sequence is that of Cobyric acid synthase from Synechococcus elongatus (strain ATCC 33912 / PCC 7942 / FACHB-805) (Anacystis nidulans R2).